Here is a 94-residue protein sequence, read N- to C-terminus: Acylphosphatase (94 aa).

The region spanning 7 to 94 (RLTARITGVV…GEFDDFRIID (88 aa)) is the Acylphosphatase-like domain. Residues R22 and N40 contribute to the active site.

It belongs to the acylphosphatase family.

It carries out the reaction an acyl phosphate + H2O = a carboxylate + phosphate + H(+). This Paenarthrobacter aurescens (strain TC1) protein is Acylphosphatase (acyP).